The following is a 1057-amino-acid chain: Adenylate-forming reductase stbB (1057 aa).

The adenylation (A) domain stretch occupies residues 21–378 (STKRQPGAVC…FRLRTDMNFE (358 aa)). AMP-binding positions include His-251, 344-345 (NF), Thr-349, and 423-426 (AVGR). The Carrier domain occupies 564-651 (ETLEEDIKAL…QMAAAIKNPS (88 aa)). The residue at position 600 (Ser-600) is an O-(pantetheine 4'-phosphoryl)serine. Positions 693–1025 (IVVVTGSSGS…SGAVILGTDV (333 aa)) are reductase (R) domain. NADP(+)-binding positions include 700–703 (SGSL), 783–785 (AAW), Tyr-858, and Lys-862.

It belongs to the adenylate-forming reductase family.

It carries out the reaction ilicicolinate B + AH2 + ATP = ilicicolin B + A + AMP + diphosphate. Its pathway is secondary metabolite biosynthesis; terpenoid biosynthesis. Nonribosomal peptide synthase-like protein; part of the cluster that mediates the biosynthesis of LL-Z1272-beta, also known as ilicicolin B, a prenylated aryl-aldehyde produced by several fungi and that serves as a key pathway intermediate for many fungal meroterpenoids. The first step in the pathway is performed by the non-reducing polyketide synthase stbA that produces orsellinic acid by condensing acetyl-CoA with 3 malonyl-CoA units. The prenyltransferase stbC then prenylates orsenilic acid into grifolic acid. Finally, grifolic acid is reduced to ilicicolin B by the NRPS-like protein stbB. This Stachybotrys bisbyi (Hyalostachybotrys bisbyi) protein is Adenylate-forming reductase stbB.